A 347-amino-acid polypeptide reads, in one-letter code: Protein RecA (347 aa).

Residue 65–72 coordinates ATP; the sequence is GPESSGKT.

It belongs to the RecA family.

Its subcellular location is the cytoplasm. In terms of biological role, can catalyze the hydrolysis of ATP in the presence of single-stranded DNA, the ATP-dependent uptake of single-stranded DNA by duplex DNA, and the ATP-dependent hybridization of homologous single-stranded DNAs. It interacts with LexA causing its activation and leading to its autocatalytic cleavage. The protein is Protein RecA of Marinobacter nauticus (strain ATCC 700491 / DSM 11845 / VT8) (Marinobacter aquaeolei).